The chain runs to 87 residues: LYR motif-containing protein 2 (87 aa).

The N-terminal 19 residues, 1-19 (MGSRLPPAALTLKQFLVRQ), are a transit peptide targeting the mitochondrion.

This sequence belongs to the complex I LYR family.

It localises to the mitochondrion. Involved in efficient integration of the N-module into mitochondrial respiratory chain complex I. The polypeptide is LYR motif-containing protein 2 (lyrm2) (Xenopus tropicalis (Western clawed frog)).